We begin with the raw amino-acid sequence, 855 residues long: DNA mismatch repair protein MutS (855 aa).

615–622 serves as a coordination point for ATP; sequence GPNMGGKS.

This sequence belongs to the DNA mismatch repair MutS family.

In terms of biological role, this protein is involved in the repair of mismatches in DNA. It is possible that it carries out the mismatch recognition step. This protein has a weak ATPase activity. The chain is DNA mismatch repair protein MutS from Aliivibrio salmonicida (strain LFI1238) (Vibrio salmonicida (strain LFI1238)).